A 431-amino-acid polypeptide reads, in one-letter code: MYRFAPSPTGDMHIGNLRAAIFNYICSLQDKSGFILRIEDTDKERNIQGKEKDILEILSKFGIKPQQIYIQSENLKFHRQLASKLLIDKKAFACFCTEEELEAKKQKAKEEGVAYRYDGTCERLSDAEVLACDKPFVIRMKKPERTMSFTDAIKGELSFEPDAVDSFVIMRTDKTPTYNFACAVDDMLEGVTFVIRGEDHVSNTPKQDLIREGLGYTGKMNYAHLPILLNIEGKKMSKRENESSVKWLFEQGFLPEAIANYLILLGNKTPSEIFTIDEAVKWFDITKISRSPARFDVKKLEQINREHIKLASDDRIAEVFGMDKNLANLVRFYTQESSLVPEIKEKVNKIFAPKVAPEEYKSEFETIKNAAKNLGEFENFDDFKKALMTATGLKGKNFFMPLRALLTGDLHGPELSELYPLIKGDLARIIA.

The 'HIGH' region signature appears at 6-16; that stretch reads PSPTGDMHIGN. Residues 235-239 carry the 'KMSKS' region motif; sequence KMSKR. Lysine 238 lines the ATP pocket.

This sequence belongs to the class-I aminoacyl-tRNA synthetase family. Glutamate--tRNA ligase type 1 subfamily. As to quaternary structure, monomer.

Its subcellular location is the cytoplasm. It catalyses the reaction tRNA(Glu) + L-glutamate + ATP = L-glutamyl-tRNA(Glu) + AMP + diphosphate. Catalyzes the attachment of glutamate to tRNA(Glu) in a two-step reaction: glutamate is first activated by ATP to form Glu-AMP and then transferred to the acceptor end of tRNA(Glu). This is Glutamate--tRNA ligase 1 from Campylobacter curvus (strain 525.92).